A 295-amino-acid chain; its full sequence is Threonine/homoserine exporter RhtA (295 aa).

Residues 1–9 lie on the Cytoplasmic side of the membrane; the sequence is MPGSLRKMP. Residues 10 to 30 traverse the membrane as a helical segment; the sequence is VWLPIVILLVAMASIQGGASL. The EamA 1 domain maps to 30-135; that stretch reads LAKSLFPLVG…VLAVLGLWFL (106 aa). Residues 31-38 are Periplasmic-facing; that stretch reads AKSLFPLV. The chain crosses the membrane as a helical span at residues 39-59; the sequence is GAPGVTALRLALGTLILIAFF. The Cytoplasmic segment spans residues 60–71; it reads KPWRLRFAKEQR. The chain crosses the membrane as a helical span at residues 72-92; it reads LPLLFYGVSLGGMNYLFYLSI. Gln-93 is a topological domain (periplasmic). The helical transmembrane segment at 94 to 114 threads the bilayer; sequence TVPLGIAVALEFTGPLAVALF. Over 115 to 118 the chain is Cytoplasmic; that stretch reads SSRR. The helical transmembrane segment at 119 to 139 threads the bilayer; that stretch reads PVDFVWVVLAVLGLWFLLPLG. Topologically, residues 140–146 are periplasmic; it reads QDVSHVD. Residues 147–167 traverse the membrane as a helical segment; the sequence is LTGCALALGAGACWAIYILSG. The EamA 2 domain occupies 159-278; it reads CWAIYILSGQ…LGAIIAASMG (120 aa). The Cytoplasmic segment spans residues 168–175; that stretch reads QRAGAEHG. Residues 176-196 traverse the membrane as a helical segment; it reads PATVAIGSLIAALIFVPIGAL. Residues 197-200 are Periplasmic-facing; it reads QAGE. The chain crosses the membrane as a helical span at residues 201–221; sequence ALWHWSVIPLGLAVAILSTAL. Over 222 to 237 the chain is Cytoplasmic; the sequence is PYSLEMIALTRLPTRT. Residues 238 to 258 traverse the membrane as a helical segment; the sequence is FGTLMSMEPALAAVSGMIFLG. Residues 259–262 lie on the Periplasmic side of the membrane; that stretch reads ETLT. The chain crosses the membrane as a helical span at residues 263-283; sequence PIQLLALGAIIAASMGSTLTV. The Cytoplasmic portion of the chain corresponds to 284 to 295; that stretch reads RKESKIKELDIN.

Belongs to the drug/metabolite transporter (DMT) superfamily. 10 TMS drug/metabolite exporter (DME) (TC 2.A.7.3) family.

The protein localises to the cell inner membrane. Its function is as follows. Involved in the efflux of threonine and homoserine. The chain is Threonine/homoserine exporter RhtA (rhtA) from Escherichia coli O157:H7.